Here is a 427-residue protein sequence, read N- to C-terminus: GTPase Obg (427 aa).

Positions 1–158 (MFIDKAKIHL…LTVTLELKLI (158 aa)) constitute an Obg domain. The region spanning 159-330 (ADVGLVGFPN…LLDYVSIKLK (172 aa)) is the OBG-type G domain. GTP-binding positions include 165-172 (GFPNVGKS), 190-194 (FTTLT), 212-215 (DIPG), 282-285 (NKTD), and 311-313 (SAA). Mg(2+) is bound by residues serine 172 and threonine 192. The OCT domain occupies 347 to 427 (LYELKEKDTN…IYDVEFEYFH (81 aa)).

This sequence belongs to the TRAFAC class OBG-HflX-like GTPase superfamily. OBG GTPase family. Monomer. Requires Mg(2+) as cofactor.

It is found in the cytoplasm. Functionally, an essential GTPase which binds GTP, GDP and possibly (p)ppGpp with moderate affinity, with high nucleotide exchange rates and a fairly low GTP hydrolysis rate. Plays a role in control of the cell cycle, stress response, ribosome biogenesis and in those bacteria that undergo differentiation, in morphogenesis control. This chain is GTPase Obg, found in Alkaliphilus metalliredigens (strain QYMF).